Here is a 370-residue protein sequence, read N- to C-terminus: Putative agmatine deiminase (370 aa).

The Amidino-cysteine intermediate role is filled by cysteine 361.

It belongs to the agmatine deiminase family.

The catalysed reaction is agmatine + H2O = N-carbamoylputrescine + NH4(+). The polypeptide is Putative agmatine deiminase (Shewanella sp. (strain MR-7)).